The following is a 120-amino-acid chain: NAD(P)H-quinone oxidoreductase subunit 3, chloroplastic (120 aa).

The next 3 helical transmembrane spans lie at 9–29 (IFWA…LISG), 64–84 (MFAL…PWAM), and 88–108 (VLGV…IVGS).

This sequence belongs to the complex I subunit 3 family. NDH is composed of at least 16 different subunits, 5 of which are encoded in the nucleus.

It localises to the plastid. The protein resides in the chloroplast thylakoid membrane. The catalysed reaction is a plastoquinone + NADH + (n+1) H(+)(in) = a plastoquinol + NAD(+) + n H(+)(out). The enzyme catalyses a plastoquinone + NADPH + (n+1) H(+)(in) = a plastoquinol + NADP(+) + n H(+)(out). NDH shuttles electrons from NAD(P)H:plastoquinone, via FMN and iron-sulfur (Fe-S) centers, to quinones in the photosynthetic chain and possibly in a chloroplast respiratory chain. The immediate electron acceptor for the enzyme in this species is believed to be plastoquinone. Couples the redox reaction to proton translocation, and thus conserves the redox energy in a proton gradient. In Buxus microphylla (Littleleaf boxwood), this protein is NAD(P)H-quinone oxidoreductase subunit 3, chloroplastic.